The primary structure comprises 353 residues: MTIALGRFTKDEKDLFDTMDDWLRRDRFVFVGWSGLLLFPCAYFALGGWFTGTTFVTSWYTHGLASSYLEGCNFLTAAVSTPANSLAHSLLLLWGPEAQGDFTRWCQLGGLWTFVALHGAFGLIGFMLRQFELARSVQLRPYNAIAFSGPIAVFVSVFLIYPLGQSGWFFAPSFGVAAIFRFILFFQGFHNWTLNPFHMMGVAGVLGAALLCAIHGATVENTLFEDGDGANTFRAFNPTQAEETYSMVTANRFWSQIFGVAFSNKRWLHFFMLFVPVTGLWMSALGVVGLALNLRAYDFVSQEIRAAEDPEFETFYTKNILLNEGIRAWMAAQDQPHENLIFPEEVLPRGNAL.

Residue threonine 2 is modified to N-acetylthreonine. Threonine 2 carries the phosphothreonine modification. A helical membrane pass occupies residues cysteine 41–threonine 61. Histidine 118 serves as a coordination point for chlorophyll a. The chain crosses the membrane as a helical span at residues glycine 125–proline 141. Residues glutamine 130 and asparagine 143 each coordinate pheophytin a. A helical membrane pass occupies residues valine 153–serine 166. Residue histidine 198 coordinates chlorophyll a. A helical transmembrane segment spans residues alanine 208–aspartate 228. A plastoquinone is bound by residues histidine 215 and phenylalanine 262. Histidine 215 is a Fe cation binding site. A Fe cation-binding site is contributed by histidine 269. Residues glycine 279–arginine 295 form a helical membrane-spanning segment.

This sequence belongs to the reaction center PufL/M/PsbA/D family. PSII is composed of 1 copy each of membrane proteins PsbA, PsbB, PsbC, PsbD, PsbE, PsbF, PsbH, PsbI, PsbJ, PsbK, PsbL, PsbM, PsbT, PsbX, PsbY, PsbZ, Psb30/Ycf12, at least 3 peripheral proteins of the oxygen-evolving complex and a large number of cofactors. It forms dimeric complexes. The D1/D2 heterodimer binds P680, chlorophylls that are the primary electron donor of PSII, and subsequent electron acceptors. It shares a non-heme iron and each subunit binds pheophytin, quinone, additional chlorophylls, carotenoids and lipids. There is also a Cl(-1) ion associated with D1 and D2, which is required for oxygen evolution. The PSII complex binds additional chlorophylls, carotenoids and specific lipids. serves as cofactor.

The protein resides in the plastid. It is found in the chloroplast thylakoid membrane. The catalysed reaction is 2 a plastoquinone + 4 hnu + 2 H2O = 2 a plastoquinol + O2. Its function is as follows. Photosystem II (PSII) is a light-driven water:plastoquinone oxidoreductase that uses light energy to abstract electrons from H(2)O, generating O(2) and a proton gradient subsequently used for ATP formation. It consists of a core antenna complex that captures photons, and an electron transfer chain that converts photonic excitation into a charge separation. The D1/D2 (PsbA/PsbD) reaction center heterodimer binds P680, the primary electron donor of PSII as well as several subsequent electron acceptors. D2 is needed for assembly of a stable PSII complex. The protein is Photosystem II D2 protein of Ranunculus macranthus (Large buttercup).